Reading from the N-terminus, the 38-residue chain is Large ribosomal subunit protein bL36 (38 aa).

It belongs to the bacterial ribosomal protein bL36 family.

In Streptococcus pneumoniae serotype 4 (strain ATCC BAA-334 / TIGR4), this protein is Large ribosomal subunit protein bL36 (rpmJ).